A 119-amino-acid polypeptide reads, in one-letter code: Large ribosomal subunit protein uL22 (119 aa).

Belongs to the universal ribosomal protein uL22 family. Part of the 50S ribosomal subunit.

In terms of biological role, this protein binds specifically to 23S rRNA; its binding is stimulated by other ribosomal proteins, e.g. L4, L17, and L20. It is important during the early stages of 50S assembly. It makes multiple contacts with different domains of the 23S rRNA in the assembled 50S subunit and ribosome. Its function is as follows. The globular domain of the protein is located near the polypeptide exit tunnel on the outside of the subunit, while an extended beta-hairpin is found that lines the wall of the exit tunnel in the center of the 70S ribosome. This is Large ribosomal subunit protein uL22 from Chlorobium chlorochromatii (strain CaD3).